The sequence spans 568 residues: Potassium-transporting ATPase potassium-binding subunit (568 aa).

A run of 11 helical transmembrane segments spans residues 6–26 (ILQI…IGGF), 64–84 (TGYA…TYLI), 135–155 (IALA…AIAF), 179–199 (LYIL…QGVI), 254–274 (LANL…TYTF), 285–305 (WALL…VYPA), 382–402 (GLYG…LMVG), 419–439 (MVML…AAGI), 459–481 (VLYG…SANT), 488–508 (LGIA…AAAG), and 529–549 (LFVT…FFPA).

The protein belongs to the KdpA family. The system is composed of three essential subunits: KdpA, KdpB and KdpC.

It is found in the cell inner membrane. Functionally, part of the high-affinity ATP-driven potassium transport (or Kdp) system, which catalyzes the hydrolysis of ATP coupled with the electrogenic transport of potassium into the cytoplasm. This subunit binds the periplasmic potassium ions and delivers the ions to the membrane domain of KdpB through an intramembrane tunnel. This Solibacter usitatus (strain Ellin6076) protein is Potassium-transporting ATPase potassium-binding subunit.